The chain runs to 443 residues: Endothelin receptor type B (443 aa).

Residues 1 to 26 form the signal peptide; the sequence is MQPLPTLCGRVLVALILACGVAGVQG. The Extracellular portion of the chain corresponds to 27–102; it reads EERRFPPARA…RTIEIKETFK (76 aa). The segment covering 51–62 has biased composition (polar residues); that stretch reads TKTSWPTGSNAS. The interval 51–89 is disordered; sequence TKTSWPTGSNASVPRLSAPPQMPKAGRTAGAQRRTLPPP. Asn60 carries an N-linked (GlcNAc...) asparagine glycan. Residues 103-127 form a helical membrane-spanning segment; that stretch reads YINTVVSCLVFVLGIIGNSTLLRII. At 128–138 the chain is on the cytoplasmic side; the sequence is YKNKCMRNGPN. The helical transmembrane segment at 139 to 164 threads the bilayer; the sequence is ILIASLALGDLLHIIIDIPINVYKLL. The Extracellular segment spans residues 165 to 176; it reads AEDWPFGVEMCK. A disulfide bridge connects residues Cys175 and Cys256. Residues 177–198 form a helical membrane-spanning segment; sequence LVPFIQKASVGITVLSLCALSI. At 199–219 the chain is on the cytoplasmic side; it reads DRYRAVASWSRIKGIGVPKWT. A helical transmembrane segment spans residues 220-244; it reads AVEIVLIWVVSVVLAVPEAVGFDMI. The Extracellular segment spans residues 245 to 272; it reads TADYKGSYLRICLLHPTQKTAFMQFYKN. The chain crosses the membrane as a helical span at residues 273 to 297; it reads AKDWWLFSFYFCLPLAITAFFYTLE. The Cytoplasmic portion of the chain corresponds to 298 to 325; sequence TCEMLRKKSGMQIALNDHLKQRREVAKT. Phosphoserine is present on Ser306. A helical transmembrane segment spans residues 326–351; the sequence is VFCLVLVFALCWLPLHLSRILKHTLY. The Extracellular portion of the chain corresponds to 352–363; the sequence is DQNDPHRCELLS. Residues 364–390 traverse the membrane as a helical segment; that stretch reads FLLVLEYIGINMASLNSCINPIALYLV. Residues 391-443 lie on the Cytoplasmic side of the membrane; it reads SKRFKNCFKWCLCCWCQSFEEKQSLEDKQSCLKFKANDHGYDNFRSSNKYSSS. S-palmitoyl cysteine attachment occurs at residues Cys403, Cys404, and Cys406. Phosphoserine is present on Ser420. Residue Tyr440 is modified to Phosphotyrosine. Residues Ser441, Ser442, and Ser443 each carry the phosphoserine modification.

It belongs to the G-protein coupled receptor 1 family. Endothelin receptor subfamily. EDNRB sub-subfamily.

The protein localises to the cell membrane. Functionally, non-specific receptor for endothelin 1, 2, and 3. Mediates its action by association with G proteins that activate a phosphatidylinositol-calcium second messenger system. In Equus caballus (Horse), this protein is Endothelin receptor type B (EDNRB).